Consider the following 542-residue polypeptide: Protein MGF 505-10R (542 aa).

Belongs to the asfivirus MGF 505 family.

In terms of biological role, plays a role in virus cell tropism, and may be required for efficient virus replication in macrophages. The chain is Protein MGF 505-10R from Ornithodoros (relapsing fever ticks).